Here is a 185-residue protein sequence, read N- to C-terminus: Peptidyl-tRNA hydrolase (185 aa).

Phenylalanine 12 provides a ligand contact to tRNA. The Proton acceptor role is filled by histidine 17. TRNA contacts are provided by tyrosine 61, asparagine 63, and asparagine 109.

The protein belongs to the PTH family. In terms of assembly, monomer.

The protein localises to the cytoplasm. It catalyses the reaction an N-acyl-L-alpha-aminoacyl-tRNA + H2O = an N-acyl-L-amino acid + a tRNA + H(+). Functionally, hydrolyzes ribosome-free peptidyl-tRNAs (with 1 or more amino acids incorporated), which drop off the ribosome during protein synthesis, or as a result of ribosome stalling. Catalyzes the release of premature peptidyl moieties from peptidyl-tRNA molecules trapped in stalled 50S ribosomal subunits, and thus maintains levels of free tRNAs and 50S ribosomes. The protein is Peptidyl-tRNA hydrolase of Borrelia garinii subsp. bavariensis (strain ATCC BAA-2496 / DSM 23469 / PBi) (Borreliella bavariensis).